A 113-amino-acid chain; its full sequence is Hydrogenase maturation factor HypA (113 aa).

His2 is a Ni(2+) binding site. Cys73, Cys76, Cys89, and Cys92 together coordinate Zn(2+).

Belongs to the HypA/HybF family.

Involved in the maturation of [NiFe] hydrogenases. Required for nickel insertion into the metal center of the hydrogenase. This chain is Hydrogenase maturation factor HypA, found in Legionella pneumophila subsp. pneumophila (strain Philadelphia 1 / ATCC 33152 / DSM 7513).